The chain runs to 161 residues: Allophycocyanin subunit alpha-B (161 aa).

Asn71 carries the N4-methylasparagine modification. Position 81 (Cys81) interacts with (2R,3E)-phycocyanobilin.

The protein belongs to the phycobiliprotein family. Heterohexamer of two alpha chains, one alpha-B chain and three beta chains. Contains one covalently linked phycocyanobilin chromophore. The chromophore is added by phycocyanobilin lyase CpcS 1.

It is found in the cellular thylakoid membrane. Light-harvesting photosynthetic bile pigment-protein from the phycobiliprotein complex. Allophycocyanin has a maximum absorption at approximately 654 nanometers. The polypeptide is Allophycocyanin subunit alpha-B (apcD) (Nostoc sp. (strain PCC 7120 / SAG 25.82 / UTEX 2576)).